A 297-amino-acid polypeptide reads, in one-letter code: Ribosomal protein L11 methyltransferase (297 aa).

S-adenosyl-L-methionine is bound by residues Thr-150, Gly-171, Asp-193, and Asn-233.

The protein belongs to the methyltransferase superfamily. PrmA family.

The protein resides in the cytoplasm. It carries out the reaction L-lysyl-[protein] + 3 S-adenosyl-L-methionine = N(6),N(6),N(6)-trimethyl-L-lysyl-[protein] + 3 S-adenosyl-L-homocysteine + 3 H(+). Its function is as follows. Methylates ribosomal protein L11. This is Ribosomal protein L11 methyltransferase from Laribacter hongkongensis (strain HLHK9).